Consider the following 749-residue polypeptide: Disintegrin and metalloproteinase domain-containing protein 10 (749 aa).

The N-terminal stretch at 1 to 18 (MVLPTVLILLLSWAAGLG) is a signal peptide. Positions 19 to 214 (GQYGNPLNKY…MGPELLRKKR (196 aa)) are excised as a propeptide. The short motif at 171–178 (GGCADHSV) is the Cysteine switch element. C173 provides a ligand contact to Zn(2+). The Extracellular segment spans residues 215-673 (TTLAERNTCQ…SPQLYENIAE (459 aa)). The Peptidase M12B domain maps to 221–457 (NTCQLYIQTD…KRNNCFVESG (237 aa)). 17 disulfide bridges follow: C223/C314, C345/C452, C400/C436, C461/C496, C472/C485, C474/C480, C484/C516, C504/C512, C511/C537, C525/C544, C531/C563, C556/C568, C573/C599, C581/C608, C583/C598, C595/C640, and C633/C646. N-linked (GlcNAc...) asparagine glycosylation is found at N268 and N279. Position 384 (H384) interacts with Zn(2+). Residue E385 is part of the active site. The Zn(2+) site is built by H388 and H394. A glycan (N-linked (GlcNAc...) asparagine) is linked at N440. A Disintegrin domain is found at 458 to 552 (QPICGNGMVE…LCPASDPKPN (95 aa)). An N-linked (GlcNAc...) asparagine glycan is attached at N552. Residues 674–697 (WIVAHWWAVLLMGIALIMLMAGFI) traverse the membrane as a helical segment. The Cytoplasmic segment spans residues 698–749 (KICSVHTPSSNPKLPPPKPLPGTLKRRRPPQPIQQPPRQRPRESYQMGHMRR). Positions 705-749 (PSSNPKLPPPKPLPGTLKRRRPPQPIQQPPRQRPRESYQMGHMRR) are disordered. The SH3-binding motif lies at 709–716 (PKLPPPKP). T720 carries the phosphothreonine modification. The short motif at 723–729 (RRRPPQP) is the SH3-binding element. The interaction with AP2A1, AP2A2 and AP2M1 stretch occupies residues 735-749 (RQRPRESYQMGHMRR).

Forms a ternary EFNA5-EPHA3-ADAM10 complex mediating EFNA5 extracellular domain shedding by ADAM10 which regulates the EFNA5-EPHA3 complex internalization and function, the cleavage occurs in trans, with ADAM10 and its substrate being on the membranes of opposing cells. Interacts with the clathrin adapter AP2 complex subunits AP2A1, AP2A2, AP2B1, and AP2M1; this interaction facilitates ADAM10 endocytosis from the plasma membrane during long-term potentiation in hippocampal neurons. Forms a ternary complex composed of ADAM10, EPHA4 and CADH1; within the complex, ADAM10 cleaves CADH1 which disrupts adherens junctions. Interacts with EPHA2. Interacts with NGF in a divalent cation-dependent manner. Interacts with TSPAN14; the interaction promotes ADAM10 maturation and cell surface expression. Interacts with TSPAN5, TSPAN10, TSPAN14, TSPAN15, TSPAN17 and TSPAN33; these interactions regulate ADAM10 substrate specificity, endocytosis and turnover. Interacts (via extracellular domain) with TSPAN33 (via extracellular domain) and (via cytoplasmic domain) with AFDN; interaction with TSPAN33 allows the docking of ADAM10 to zonula adherens through a PDZ11-dependent interaction between TSPAN33 and PLEKHA7 while interaction with AFDN locks ADAM10 at zonula adherens. Interacts with DLG1; this interaction recruits ADAM10 to the cell membrane during long-term depression in hippocampal neurons. Interacts (via extracellular domain) with BACE1 (via extracellular domain). Interacts with FAM171A1. Requires Zn(2+) as cofactor. Post-translationally, the precursor is cleaved by furin and PCSK7. As to expression, expressed in brain, kidney, lung, spleen, ovary and testis.

Its subcellular location is the cell membrane. The protein resides in the golgi apparatus membrane. It is found in the cytoplasmic vesicle. It localises to the clathrin-coated vesicle. The protein localises to the cell projection. Its subcellular location is the axon. The protein resides in the dendrite. It is found in the cell junction. It localises to the adherens junction. The protein localises to the cytoplasm. The catalysed reaction is Endopeptidase of broad specificity.. Its activity is regulated as follows. Catalytically inactive when the propeptide is intact and associated with the mature enzyme. The disintegrin and cysteine-rich regions modulate access of substrates to exerts an inhibitory effect on the cleavage of ADAM10 substrates. In terms of biological role, transmembrane metalloprotease which mediates the ectodomain shedding of a myriad of transmembrane proteins, including adhesion proteins, growth factor precursors and cytokines being essential for development and tissue homeostasis. Associates with six members of the tetraspanin superfamily TspanC8 which regulate its exit from the endoplasmic reticulum and its substrate selectivity. Cleaves the membrane-bound precursor of TNF-alpha at '76-Ala-|-Val-77' to its mature soluble form. Responsible for the proteolytical release of soluble JAM3 from endothelial cells surface. Responsible for the proteolytic release of several other cell-surface proteins, including heparin-binding epidermal growth-like factor, ephrin-A2, CD44, CDH2 and for constitutive and regulated alpha-secretase cleavage of amyloid precursor protein (APP). Contributes to the normal cleavage of the cellular prion protein. Involved in the cleavage of the adhesion molecule L1 at the cell surface and in released membrane vesicles, suggesting a vesicle-based protease activity. Also controls the proteolytic processing of Notch and mediates lateral inhibition during neurogenesis. Required for the development of type 1 transitional B cells into marginal zone B cells, probably by cleaving Notch. Responsible for the FasL ectodomain shedding and for the generation of the remnant ADAM10-processed FasL (FasL APL) transmembrane form. Also cleaves the ectodomain of the integral membrane proteins CORIN and ITM2B. Mediates the proteolytic cleavage of LAG3, leading to release the secreted form of LAG3. Mediates the proteolytic cleavage of IL6R and IL11RA, leading to the release of secreted forms of IL6R and IL11RA. Enhances the cleavage of CHL1 by BACE1. Cleaves NRCAM. Cleaves TREM2, resulting in shedding of the TREM2 ectodomain. Involved in the development and maturation of glomerular and coronary vasculature. During development of the cochlear organ of Corti, promotes pillar cell separation by forming a ternary complex with CADH1 and EPHA4 and cleaving CADH1 at adherens junctions. May regulate the EFNA5-EPHA3 signaling. Regulates leukocyte transmigration as a sheddase for the adherens junction protein VE-cadherin/CDH5 in endothelial cells. This chain is Disintegrin and metalloproteinase domain-containing protein 10 (Adam10), found in Rattus norvegicus (Rat).